The sequence spans 568 residues: Natural resistance-associated macrophage protein 2 (568 aa).

The span at 1 to 20 (MVLDPKEKMPDDGASGDHGD) shows a compositional bias: basic and acidic residues. The segment at 1-45 (MVLDPKEKMPDDGASGDHGDSASLGAINPAYSNSSLPHSTGDSEE) is disordered. Topologically, residues 1-69 (MVLDPKEKMP…EEYSCFSFRK (69 aa)) are cytoplasmic. Polar residues predominate over residues 30-40 (AYSNSSLPHST). Residues 70–90 (LWAFTGPGFLMSIAYLDPGNI) traverse the membrane as a helical segment. At 91–95 (ESDLQ) the chain is on the extracellular side. A helical transmembrane segment spans residues 96 to 117 (SGAVAGFKLLWVLLLATIVGLL). Over 118 to 154 (LQRLAARLGVVTGLHLAEVCHRQYPKVPRIILWLMVE) the chain is Cytoplasmic. A helical membrane pass occupies residues 155-175 (LAIIGSDMQEVIGSAIAINLL). The Extracellular segment spans residues 176–179 (SAGR). A helical membrane pass occupies residues 180-194 (VPLWGGVLITIADTF). The Cytoplasmic portion of the chain corresponds to 195-208 (VFLFLDKYGLRKLE). A helical transmembrane segment spans residues 209–229 (AFFGFLITIMALTFGYEYITV). Topologically, residues 230–255 (KPSQSQVLRGMFVPSCPGCRTPQVEQ) are extracellular. The chain crosses the membrane as a helical span at residues 256 to 276 (AVGIVGAVIMPHNMYLHSALV). Residues 277 to 301 (KSRQVNRANKQEVREANKYFFIESC) lie on the Cytoplasmic side of the membrane. A helical membrane pass occupies residues 302 to 322 (IALFVSFIINVFVVSVFAEAF). Residues 323 to 360 (FEKTNKQVVEVCKNNSSPHADLFPSDNSTLAVDIYKGG) are Extracellular-facing. N-linked (GlcNAc...) asparagine glycans are attached at residues N336 and N349. A helical transmembrane segment spans residues 361-381 (VVLGCYFGPAALYIWAVGILA). The Cytoplasmic portion of the chain corresponds to 382–408 (AGQSSTMTGTYSGQFVMEGFLNLKWSR). A helical membrane pass occupies residues 409–429 (FARVILTRSIAIIPTLLVAVF). Residues 430–440 (QDVEHLTGMND) are Extracellular-facing. The chain crosses the membrane as a helical span at residues 441-461 (FLNVLQSLQLPFALIPILTFT). Residues 462 to 482 (SLRPVMSEFSNGIGWRIAGGI) are Cytoplasmic-facing. The chain crosses the membrane as a helical span at residues 483–503 (LVLIVCSINMYFVVVYVQELG). At 504 to 506 (HVA) the chain is on the extracellular side. The helical transmembrane segment at 507–527 (LYVVAAVVSVAYLTFVFYLGW) threads the bilayer. Over 528 to 568 (QCLIALGLSFLDCGRSYRLGLTAQPELYLLNTVDADSVVSR) the chain is Cytoplasmic. The tract at residues 555-559 (YLLNT) is required for early endosome targeting. Phosphoserine is present on residues L556, S564, and S567.

It belongs to the NRAMP family. As to quaternary structure, forms a complex with NDFIP1 and NEDD4L, in cortical neurons, in response to iron and cobalt exposure; this interaction leads to SLC11A2 ubiquitination by NEDD4L and proteasome-dependent degradation. Interacts with NDFIP1, NDFIP2 and WWP2; this interaction leads to SLC11A2 ubiquitination by WWP2 and subsequent proteasome-dependent degradation. Interacts with COX2 and TOM6 at the outer mitochondrion membrane. Interacts with ARRDC1; this interaction regulates the incorporation of SLC11A2 into extracellular vesicles through an ubiquitination-dependent mechanism. Interacts with ARRDC4; controls the incorporation of SLC11A2 into extracellular vesicles through an ubiquitination-dependent mechanism. Post-translationally, ubiquitinated by WWP2. In terms of processing, N-glycosylated. As to expression, abundantly expressed in erythroid precursor cells (at protein level). In terms of tissue distribution, expressed in duodenum (at protein level).

It is found in the golgi apparatus. The protein localises to the trans-Golgi network membrane. Its subcellular location is the early endosome membrane. The protein resides in the recycling endosome membrane. It localises to the cell membrane. It is found in the late endosome membrane. The protein localises to the lysosome membrane. Its subcellular location is the apical cell membrane. The protein resides in the mitochondrion outer membrane. It localises to the extracellular vesicle membrane. It carries out the reaction Fe(2+)(in) + H(+)(in) = Fe(2+)(out) + H(+)(out). It catalyses the reaction Co(2+)(out) + H(+)(out) = Co(2+)(in) + H(+)(in). The enzyme catalyses Cd(2+)(out) + H(+)(out) = Cd(2+)(in) + H(+)(in). The catalysed reaction is Mn(2+)(in) + H(+)(in) = Mn(2+)(out) + H(+)(out). It carries out the reaction Zn(2+)(out) + H(+)(out) = Zn(2+)(in) + H(+)(in). It catalyses the reaction Ni(2+)(out) + H(+)(out) = Ni(2+)(in) + H(+)(in). The enzyme catalyses H(+)(in) = H(+)(out). The catalysed reaction is Fe(2+)(in) = Fe(2+)(out). Its function is as follows. Proton-coupled metal ion symporter operating with a proton to metal ion stoichiometry of 1:1. Selectively transports various divalent metal cations, in decreasing affinity: Cd(2+) &gt; Fe(2+) &gt; Co(2+), Mn(2+) &gt;&gt; Zn(2+), Ni(2+), VO(2+). Essential for maintenance of iron homeostasis by modulating intestinal absorption of dietary Fe(2+) and TF-associated endosomal Fe(2+) transport in erythroid precursors and other cells. Enables Fe(2+) and Mn(2+) ion entry into mitochondria, and is thus expected to promote mitochondrial heme synthesis, iron-sulfur cluster biogenesis and antioxidant defense. Can mediate uncoupled fluxes of either protons or metal ions. The chain is Natural resistance-associated macrophage protein 2 (Slc11a2) from Mus musculus (Mouse).